The following is a 253-amino-acid chain: Ditrans,polycis-undecaprenyl-diphosphate synthase ((2E,6E)-farnesyl-diphosphate specific) (253 aa).

Residue Asp-26 is part of the active site. Position 26 (Asp-26) interacts with Mg(2+). Substrate contacts are provided by residues Gly-27–Arg-30, Trp-31, Arg-39, His-43, and Ser-71–Glu-73. Asn-74 serves as the catalytic Proton acceptor. Substrate contacts are provided by Trp-75, Arg-77, and Arg-194. Residue His-199 coordinates Mg(2+). Arg-200–Ser-202 serves as a coordination point for substrate. Glu-213 contributes to the Mg(2+) binding site.

Belongs to the UPP synthase family. In terms of assembly, homodimer. It depends on Mg(2+) as a cofactor.

The catalysed reaction is 8 isopentenyl diphosphate + (2E,6E)-farnesyl diphosphate = di-trans,octa-cis-undecaprenyl diphosphate + 8 diphosphate. Its function is as follows. Catalyzes the sequential condensation of isopentenyl diphosphate (IPP) with (2E,6E)-farnesyl diphosphate (E,E-FPP) to yield (2Z,6Z,10Z,14Z,18Z,22Z,26Z,30Z,34E,38E)-undecaprenyl diphosphate (di-trans,octa-cis-UPP). UPP is the precursor of glycosyl carrier lipid in the biosynthesis of bacterial cell wall polysaccharide components such as peptidoglycan and lipopolysaccharide. This is Ditrans,polycis-undecaprenyl-diphosphate synthase ((2E,6E)-farnesyl-diphosphate specific) from Shigella flexneri.